Here is a 199-residue protein sequence, read N- to C-terminus: Shikimate kinase (199 aa).

An ATP-binding site is contributed by 12–17 (GAGKST). Serine 16 contributes to the Mg(2+) binding site. Substrate-binding residues include aspartate 34, arginine 58, and glycine 80. Arginine 117 serves as a coordination point for ATP. Arginine 136 serves as a coordination point for substrate. Residues 174–199 (VSGGDRKSSEAERSGAPLRKSSEVVK) are disordered. Positions 177–186 (GDRKSSEAER) are enriched in basic and acidic residues.

This sequence belongs to the shikimate kinase family. In terms of assembly, monomer. Mg(2+) serves as cofactor.

It is found in the cytoplasm. It catalyses the reaction shikimate + ATP = 3-phosphoshikimate + ADP + H(+). The protein operates within metabolic intermediate biosynthesis; chorismate biosynthesis; chorismate from D-erythrose 4-phosphate and phosphoenolpyruvate: step 5/7. In terms of biological role, catalyzes the specific phosphorylation of the 3-hydroxyl group of shikimic acid using ATP as a cosubstrate. This Mycobacterium leprae (strain TN) protein is Shikimate kinase.